Consider the following 232-residue polypeptide: Enolase-phosphatase E1 (232 aa).

Belongs to the HAD-like hydrolase superfamily. MasA/MtnC family. In terms of assembly, monomer. It depends on Mg(2+) as a cofactor.

It carries out the reaction 5-methylsulfanyl-2,3-dioxopentyl phosphate + H2O = 1,2-dihydroxy-5-(methylsulfanyl)pent-1-en-3-one + phosphate. Its pathway is amino-acid biosynthesis; L-methionine biosynthesis via salvage pathway; L-methionine from S-methyl-5-thio-alpha-D-ribose 1-phosphate: step 3/6. It functions in the pathway amino-acid biosynthesis; L-methionine biosynthesis via salvage pathway; L-methionine from S-methyl-5-thio-alpha-D-ribose 1-phosphate: step 4/6. Its function is as follows. Bifunctional enzyme that catalyzes the enolization of 2,3-diketo-5-methylthiopentyl-1-phosphate (DK-MTP-1-P) into the intermediate 2-hydroxy-3-keto-5-methylthiopentenyl-1-phosphate (HK-MTPenyl-1-P), which is then dephosphorylated to form the acireductone 1,2-dihydroxy-3-keto-5-methylthiopentene (DHK-MTPene). This Acidiphilium cryptum (strain JF-5) protein is Enolase-phosphatase E1.